The primary structure comprises 594 residues: MEIINKFLDLEALLSPTVYEKLKNFDEEKLKRLIQKIREFKKYNNAFILLDEKFLDIFLQKDLDEIINEYKDFDFIFYYTGEEEKEKPKEVKKEIKKETEEKIEKEKIEFVKKEEKEQFIKKSDEDVEEKLKQLISKEEKKEDFDAERAKRYEHITKIKESVNSRIKWIAKDIDAVIEIYEDSDVSGKSTCTGTIEDFVKYFRDRFERLKVFIERKAQRKGYPLKDIKKMKGQKDIFVVGIVSDVDSTRNGNLIVRIEDTEDEATLILPKEKIEAGKIPDDILLDEVIGAIGTVSKSGSSIYVDEIIRPALPPKEPKRIDEEIYMAFLSDIHVGSKEFLHKEFEKFIRFLNGDVDNELEEKVVSRLKYICIAGDLVDGVGVYPGQEEDLYEVDIIEQYREIAMYLDQIPEHISIIISPGNHDAVRPAEPQPKLPEKITKLFNRDNIYFVGNPCTLNIHGFDTLLYHGRSFDDLVGQIRAASYENPVTIMKELIKRRLLCPTYGGRCPIAPEHKDYLVIDRDIDILHTGHIHINGYGIYRGVVMVNSGTFQEQTDFQKRMGISPTPAIVPIINMAKVGEKGHYLEWDRGVLEVRY.

This sequence belongs to the DNA polymerase delta/II small subunit family. As to quaternary structure, heterodimer of a large subunit and a small subunit.

It carries out the reaction DNA(n) + a 2'-deoxyribonucleoside 5'-triphosphate = DNA(n+1) + diphosphate. The catalysed reaction is Exonucleolytic cleavage in the 3'- to 5'-direction to yield nucleoside 5'-phosphates.. Possesses two activities: a DNA synthesis (polymerase) and an exonucleolytic activity that degrades single-stranded DNA in the 3' to 5' direction. Has a template-primer preference which is characteristic of a replicative DNA polymerase. This chain is DNA polymerase II small subunit (polB), found in Methanocaldococcus jannaschii (strain ATCC 43067 / DSM 2661 / JAL-1 / JCM 10045 / NBRC 100440) (Methanococcus jannaschii).